The following is a 1314-amino-acid chain: Enfumafungin synthase efuA (1314 aa).

The tract at residues 1-680 (MPSYHNTDKT…RYIDKASRQG (680 aa)) is terpenne cyclase. PFTB repeat units follow at residues 19–62 (LQQA…ELSL) and 66–107 (GPEI…RILG). The next 3 helical transmembrane spans lie at 133 to 153 (FFTR…IPQM), 155 to 175 (AELI…SSWA), and 230 to 250 (YQWI…FGGL). A PFTB 3 repeat occupies 260-300 (LKRCTAWLLEHQEESGDWAGFFPPIHGSIWALLLDGFSFQS). Residue Asp-395 is the Proton donor of the active site. PFTB repeat units lie at residues 417 to 458 (VMNG…DSLV) and 546 to 597 (CMRT…LRFR). Positions 681–1314 (IETLRIPSSS…ADSVLDIEEK (634 aa)) are glycosyltransferase. Residues 1200-1220 (AIVQLLYGFTTTILALFGWLK) form a helical membrane-spanning segment. Residues 1289–1314 (DSGASESSRSSLDGGHADSVLDIEEK) form a disordered region. Residues 1292-1302 (ASESSRSSLDG) are compositionally biased toward low complexity.

It in the N-terminal section; belongs to the terpene cyclase/mutase family. In the C-terminal section; belongs to the glycosyltransferase 28 family.

It localises to the membrane. Its pathway is secondary metabolite biosynthesis; terpenoid biosynthesis. Functionally, terpene cyclase-glycosyl transferase fusion protein; part of the gene cluster that mediates the biosynthesis of enfumafungin, a glycosylated fernene-type triterpenoid with potent antifungal activity, mediated by its interaction with beta-1,3-glucan synthase and the fungal cell wall. The pathway begins with the terpene cyclase-glycosyl transferase fusion protein that most likely uses 2,3-oxidosqualene as substrate and catalyzes glycosylation immediately after cyclization. The fernene glycoside then could be processed by the desaturase efuI which catalyzes isomerization of a double bond established by efuA to form the core structure. The latter would then undergo a series of hydroxylations in unknown order at C-2, C-19, C-23 and C-25, which would be catalyzed by two of the three cytochrome P450 monooxygenases efuB, efuG or efuH. The hydroxy-group at C-25 becomes oxidized by the dehydrogenase efuE to enable a spontaneous, non-enzymatic hemiacetal formation with C-23. After hydroxylation at C-2, acetylation by the acetyltransferase efuC takes place. The final steps in enfumafungin biosynthesis require expansion of the 5-membered ring by lactonization via a Baeyer-Villiger reaction mediated by one of the BGC's cytochrome P450 monooxygenases (efuB, efuG or efuH) followed by ring cleavage. This type of reaction would establish a double bond between C-20 and C-21 which could be reduced by the reductase efuL to form the final product. In Hormonema carpetanum, this protein is Enfumafungin synthase efuA.